A 332-amino-acid polypeptide reads, in one-letter code: Ribosomal RNA small subunit methyltransferase H (332 aa).

Residues 36-38 (GGY), Asp54, Phe81, Asp102, and Gln109 contribute to the S-adenosyl-L-methionine site.

Belongs to the methyltransferase superfamily. RsmH family.

The protein localises to the cytoplasm. It catalyses the reaction cytidine(1402) in 16S rRNA + S-adenosyl-L-methionine = N(4)-methylcytidine(1402) in 16S rRNA + S-adenosyl-L-homocysteine + H(+). Specifically methylates the N4 position of cytidine in position 1402 (C1402) of 16S rRNA. The sequence is that of Ribosomal RNA small subunit methyltransferase H from Nitrobacter winogradskyi (strain ATCC 25391 / DSM 10237 / CIP 104748 / NCIMB 11846 / Nb-255).